The chain runs to 455 residues: Argininosuccinate lyase (455 aa).

Belongs to the lyase 1 family. Argininosuccinate lyase subfamily.

It is found in the cytoplasm. The catalysed reaction is 2-(N(omega)-L-arginino)succinate = fumarate + L-arginine. It participates in amino-acid biosynthesis; L-arginine biosynthesis; L-arginine from L-ornithine and carbamoyl phosphate: step 3/3. This chain is Argininosuccinate lyase, found in Shewanella baltica (strain OS185).